Reading from the N-terminus, the 179-residue chain is Acireductone dioxygenase (179 aa).

The interval 1–23 is disordered; that stretch reads MVQAWYMDESTADPRMPHRAQPD. 4 residues coordinate Fe(2+): histidine 88, histidine 90, glutamate 94, and histidine 133. Ni(2+) is bound by residues histidine 88, histidine 90, glutamate 94, and histidine 133.

It belongs to the acireductone dioxygenase (ARD) family. As to quaternary structure, monomer. Interacts with MMP14. Fe(2+) is required as a cofactor. The cofactor is Ni(2+). In terms of tissue distribution, detected in prostate, liver, heart, brain, muscle, kidney and seminal vesicles.

The protein resides in the cytoplasm. It localises to the nucleus. The protein localises to the cell membrane. It carries out the reaction 1,2-dihydroxy-5-(methylsulfanyl)pent-1-en-3-one + O2 = 4-methylsulfanyl-2-oxobutanoate + formate + 2 H(+). The catalysed reaction is 1,2-dihydroxy-5-(methylsulfanyl)pent-1-en-3-one + O2 = 3-(methylsulfanyl)propanoate + CO + formate + 2 H(+). It functions in the pathway amino-acid biosynthesis; L-methionine biosynthesis via salvage pathway; L-methionine from S-methyl-5-thio-alpha-D-ribose 1-phosphate: step 5/6. In terms of biological role, catalyzes 2 different reactions between oxygen and the acireductone 1,2-dihydroxy-3-keto-5-methylthiopentene (DHK-MTPene) depending upon the metal bound in the active site. Fe-containing acireductone dioxygenase (Fe-ARD) produces formate and 2-keto-4-methylthiobutyrate (KMTB), the alpha-ketoacid precursor of methionine in the methionine recycle pathway. Ni-containing acireductone dioxygenase (Ni-ARD) produces methylthiopropionate, carbon monoxide and formate, and does not lie on the methionine recycle pathway. Also down-regulates cell migration mediated by MMP14. In Rattus norvegicus (Rat), this protein is Acireductone dioxygenase (Adi1).